Consider the following 176-residue polypeptide: Cystatin-related protein 1 (176 aa).

The first 26 residues, 1 to 26 (MCKTLHGTLLLLAIFVLFLNFSHATA), serve as a signal peptide directing secretion. The propeptide occupies 27-31 (KRTRR). A glycan (N-linked (GlcNAc...) asparagine) is linked at asparagine 71. Intrachain disulfides connect cysteine 129-cysteine 139 and cysteine 153-cysteine 173.

Belongs to the cystatin family. Prostate and lacrimal gland.

This chain is Cystatin-related protein 1 (Andpro), found in Rattus norvegicus (Rat).